A 449-amino-acid chain; its full sequence is Phosphoglucosamine mutase (449 aa).

The active-site Phosphoserine intermediate is Ser-101. The Mg(2+) site is built by Ser-101, Asp-240, Asp-242, and Asp-244. At Ser-101 the chain carries Phosphoserine.

This sequence belongs to the phosphohexose mutase family. Requires Mg(2+) as cofactor. Activated by phosphorylation.

It carries out the reaction alpha-D-glucosamine 1-phosphate = D-glucosamine 6-phosphate. Its function is as follows. Catalyzes the conversion of glucosamine-6-phosphate to glucosamine-1-phosphate. The sequence is that of Phosphoglucosamine mutase from Streptococcus suis (strain 98HAH33).